We begin with the raw amino-acid sequence, 2871 residues long: Fibrillin-1 (2871 aa).

An N-terminal signal peptide occupies residues 1–24; the sequence is MRRGRLLEVALGFTVLLASYTSHR. The propeptide occupies 25–44; it reads AEANLEAGNGKETRASRAKR. Basic and acidic residues predominate over residues 29–39; the sequence is LEAGNGKETRA. The segment at 29-49 is disordered; that stretch reads LEAGNGKETRASRAKRRGGGG. The fibrillin unique N-terminal (FUN) domain stretch occupies residues 45 to 81; sequence RGGGGHDALKGPNVCGSRYNAYCCPGWKTLPGGNQCI. Residues 45–450 are N-terminal domain; the sequence is RGGGGHDALK…PPRVLPVNVT (406 aa). 11 disulfides stabilise this stretch: cysteine 59–cysteine 68, cysteine 67–cysteine 80, cysteine 85–cysteine 94, cysteine 89–cysteine 100, cysteine 102–cysteine 111, cysteine 119–cysteine 129, cysteine 123–cysteine 134, cysteine 136–cysteine 145, cysteine 150–cysteine 160, cysteine 154–cysteine 166, and cysteine 168–cysteine 177. EGF-like domains lie at 81 to 112, 115 to 146, and 147 to 178; these read IVPICRHSCGDGFCSRPNMCTCPSGQIAPSCG, SIQHCNIRCMNGGSCSDDHCLCQKGYIGTHCG, and QPVCESGCLNGGRCVAPNRCACTYGFTGPQCE. The interaction with MFAP4 stretch occupies residues 119 to 329; that stretch reads CNIRCMNGGS…YTSPDGTRCI (211 aa). In terms of domain architecture, TB 1 spans 184 to 236; the sequence is GPCFTVVSNQMCQGQLSGIVCTKTLCCATVGRAWGHPCEMCPAQPHPCRRGFI. Residues 195–221 are hybrid domain 1; that stretch reads CQGQLSGIVCTKTLCCATVGRAWGHPC. Positions 246-287 constitute an EGF-like 4; calcium-binding domain; sequence DVDECQAIPGLCQGGNCINTVGSFECKCPAGHKFNEVSQKCE. Disulfide bonds link cysteine 250-cysteine 262, cysteine 257-cysteine 271, cysteine 273-cysteine 286, cysteine 292-cysteine 304, cysteine 299-cysteine 313, and cysteine 315-cysteine 328. Serine 268 is a glycosylation site (O-linked (Glc) serine). The EGF-like 5; calcium-binding domain maps to 288–329; the sequence is DIDECSTIPGICDGGECTNTVSSYFCKCPPGFYTSPDGTRCI. A TB 2 domain is found at 334 to 389; sequence GYCYTALTNGRCSNQLPQSITKMQCCCDVGRCWSPGVTVTPEMCPIRATEDFNKLC. Asparagine 448 carries N-linked (GlcNAc...) asparagine glycosylation. In terms of domain architecture, EGF-like 6 spans 449-489; the sequence is VTDYCQLFRYLCHNGRCIPTPGSYRCECNKGFQLDLRGECI. Disulfide bonds link cysteine 453–cysteine 465, cysteine 460–cysteine 474, cysteine 476–cysteine 488, cysteine 494–cysteine 504, cysteine 499–cysteine 513, cysteine 515–cysteine 528, cysteine 534–cysteine 546, cysteine 541–cysteine 555, cysteine 557–cysteine 570, cysteine 576–cysteine 587, cysteine 582–cysteine 596, cysteine 598–cysteine 611, cysteine 617–cysteine 628, cysteine 623–cysteine 637, and cysteine 639–cysteine 652. Serine 471 carries O-linked (Glc) serine glycosylation. Positions 490-529 constitute an EGF-like 7; calcium-binding domain; it reads DVDECEKNPCAGGECINNQGSYTCQCRPGYQSTLTRTECR. Serine 510 carries an O-linked (Glc) serine glycan. The EGF-like 8; calcium-binding domain occupies 530–571; sequence DIDECLQNGRICNNGRCINTDGSFHCVCNAGFHVTRDGKNCE. In terms of domain architecture, EGF-like 9; calcium-binding spans 572–612; the sequence is DMDECSIRNMCLNGMCINEDGSFKCICKPGFQLASDGRYCK. The region spanning 613-653 is the EGF-like 10; calcium-binding domain; the sequence is DINECETSGICMNGRCVNTDGSYRCECFPGLAVGLDGRVCV. In terms of domain architecture, TB 3 spans 659 to 711; sequence STCYGGYKRGQCVKPLFGAVTKSECCCASTEYAFGEPCQPCPSQNSAEYQALC. The 42-residue stretch at 723-764 folds into the EGF-like 11; calcium-binding domain; it reads DINECALDPDICPNGICENLRGTYKCICNSGYEVDSTGKNCV. 16 disulfides stabilise this stretch: cysteine 727–cysteine 739, cysteine 734–cysteine 748, cysteine 750–cysteine 763, cysteine 769–cysteine 781, cysteine 776–cysteine 790, cysteine 792–cysteine 805, cysteine 811–cysteine 821, cysteine 816–cysteine 830, cysteine 832–cysteine 845, cysteine 853–cysteine 875, cysteine 862–cysteine 887, cysteine 876–cysteine 890, cysteine 896–cysteine 908, cysteine 914–cysteine 926, cysteine 921–cysteine 935, and cysteine 937–cysteine 950. The EGF-like 12; calcium-binding domain occupies 765-806; it reads DINECVLNSLLCDNGQCRNTPGSFVCTCPKGFIYKPDLKTCE. An EGF-like 13; calcium-binding domain is found at 807–846; it reads DIDECESSPCINGVCKNSPGSFICECSSESTLDPTKTICI. Positions 851–902 constitute a TB 4 domain; the sequence is GTCWQTIIDGRCEININGATLKSQCCSSLGAAWGSPCTPCQVDPICGKGYSR. The interval 862–887 is hybrid domain 2; it reads CEININGATLKSQCCSSLGAAWGSPC. The EGF-like 14; calcium-binding domain maps to 910 to 951; it reads DIDECEVFPGVCKNGLCVNSKGSFKCQCPNGMTLDATGRICL. A TB 5 domain is found at 956–1008; sequence ETCFLRYEDEECTLPVVGRHRMDACCCSVGAAWGTEECEECPPRNTPEYEELC. Residues 1028–1069 form the EGF-like 15; calcium-binding domain; it reads DINECKMIPNLCTHGKCRNTIGSFKCRCDSGFALDSEERNCI. 43 cysteine pairs are disulfide-bonded: cysteine 1032–cysteine 1044, cysteine 1039–cysteine 1053, cysteine 1055–cysteine 1068, cysteine 1074–cysteine 1086, cysteine 1081–cysteine 1095, cysteine 1097–cysteine 1111, cysteine 1117–cysteine 1129, cysteine 1124–cysteine 1138, cysteine 1140–cysteine 1153, cysteine 1159–cysteine 1171, cysteine 1201–cysteine 1212, cysteine 1208–cysteine 1221, cysteine 1223–cysteine 1236, cysteine 1242–cysteine 1254, cysteine 1249–cysteine 1263, cysteine 1265–cysteine 1278, cysteine 1284–cysteine 1296, cysteine 1291–cysteine 1305, cysteine 1307–cysteine 1320, cysteine 1326–cysteine 1339, cysteine 1333–cysteine 1348, cysteine 1350–cysteine 1361, cysteine 1367–cysteine 1380, cysteine 1374–cysteine 1389, cysteine 1391–cysteine 1402, cysteine 1408–cysteine 1420, cysteine 1415–cysteine 1429, cysteine 1450–cysteine 1461, cysteine 1456–cysteine 1470, cysteine 1472–cysteine 1485, cysteine 1491–cysteine 1502, cysteine 1497–cysteine 1511, cysteine 1513–cysteine 1526, cysteine 1534–cysteine 1562, cysteine 1549–cysteine 1574, cysteine 1563–cysteine 1577, cysteine 1564–cysteine 1589, cysteine 1610–cysteine 1622, cysteine 1617–cysteine 1631, cysteine 1633–cysteine 1646, cysteine 1652–cysteine 1663, cysteine 1658–cysteine 1672, and cysteine 1674–cysteine 1687. Residues 1070-1112 enclose the EGF-like 16; calcium-binding domain; it reads DIDECRISPDLCGRGQCVNTPGDFECKCDEGYESGFMMMKNCM. One can recognise an EGF-like 17; calcium-binding domain in the interval 1113–1154; it reads DIDECQRDPLLCRGGVCLNTEGSYRCECPSGHQMSPNISACI. A glycan (O-linked (Glc) serine) is linked at serine 1135. Residue asparagine 1149 is glycosylated (N-linked (GlcNAc...) asparagine). The EGF-like 18; calcium-binding domain occupies 1155–1196; the sequence is DINECELSAHLCPHGRCVNLIGKYQRARNPGYHSTPDRLFCV. The 41-residue stretch at 1197-1237 folds into the EGF-like 19; calcium-binding domain; the sequence is DIDECSIMNGGCETFCTNSEGSYECSCQPGFALMPDQRSCT. Serine 1218 carries an O-linked (Glc) serine glycan. The region spanning 1238–1279 is the EGF-like 20; calcium-binding domain; it reads DIDECEDNPNICDGGQCTNIPGEYRCLCYDGFMASEDMKTCV. In terms of domain architecture, EGF-like 21; calcium-binding spans 1280 to 1321; it reads DVNECDLNPNICLSGTCENTKGSFICHCDMGYSGKKGKTGCT. Serine 1302 is a glycosylation site (O-linked (Glc) serine). The region spanning 1322 to 1362 is the EGF-like 22; calcium-binding domain; sequence DINECEIGAHNCDRHAVCTNTAGSFNCSCSPGWIGDGIKCT. O-linked (Glc) serine glycosylation is present at serine 1345. A glycan (N-linked (GlcNAc...) asparagine) is linked at asparagine 1347. An EGF-like 23; calcium-binding domain is found at 1363 to 1403; sequence DLDECSNGTHMCSQHADCKNTMGSYRCLCKEGYTGDGFTCA. N-linked (GlcNAc...) asparagine glycosylation occurs at asparagine 1369. Serine 1386 carries O-linked (Glc) serine glycosylation. Positions 1404-1445 constitute an EGF-like 24; calcium-binding domain; sequence DLDECSENVKLCGNVQCLYAPGGYHCEYDMGFVPSADRKSCV. Residues 1446–1486 enclose the EGF-like 25; calcium-binding domain; sequence DSDECSLPNICVFGTCHNLPGLFRCECEIGYELDRSGGNCT. Asparagine 1484 is a glycosylation site (N-linked (GlcNAc...) asparagine). Residues 1487–1527 enclose the EGF-like 26; calcium-binding domain; the sequence is DVNECLEPPTCISGNCVNTPGSYTCVCPPDFELNPTRVGCV. A glycan (O-linked (Glc) serine) is linked at serine 1508. The C-terminal domain stretch occupies residues 1528-2731; that stretch reads DTRSGNCYLD…GYPKRGRKRR (1204 aa). A TB 6 domain is found at 1532-1589; that stretch reads GNCYLDVRPRGDNGDTACSNEIGVGVSKASCCCSLGKAWGTPCEQCPPVNTSEYKILC. A Cell attachment site motif is present at residues 1541-1543; the sequence is RGD. An N-linked (GlcNAc...) asparagine glycan is attached at asparagine 1581. Positions 1606 to 1647 constitute an EGF-like 27; calcium-binding domain; sequence DIDECQELPGLCQGGKCINTFGSFQCRCPTGYYLNEDTRVCD. A glycan (O-linked (Glc) serine) is linked at serine 1628. Positions 1648–1688 constitute an EGF-like 28; calcium-binding domain; it reads DVNECETPGICGPGTCYNTVGNYTCICPPDYMQVNGGNNCM. Asparagine 1669 carries an N-linked (GlcNAc...) asparagine glycan. Positions 1693-1748 constitute a TB 7 domain; sequence SLCYRNYYADNQTCDGELLFNMTKKMCCCSYNIGRAWNKPCEQCPIPSTDEFATLC. Residues asparagine 1703 and asparagine 1713 are each glycosylated (N-linked (GlcNAc...) asparagine). Residues 1766–1807 form the EGF-like 29; calcium-binding domain; the sequence is DIDECREIPGVCENGVCINMVGSFRCECPVGFFYNDKLLVCE. Intrachain disulfides connect cysteine 1770–cysteine 1782, cysteine 1777–cysteine 1791, cysteine 1793–cysteine 1806, cysteine 1812–cysteine 1824, cysteine 1818–cysteine 1833, cysteine 1835–cysteine 1847, cysteine 1853–cysteine 1865, cysteine 1860–cysteine 1874, cysteine 1876–cysteine 1889, cysteine 1895–cysteine 1905, cysteine 1900–cysteine 1914, cysteine 1916–cysteine 1928, cysteine 1934–cysteine 1947, cysteine 1942–cysteine 1956, cysteine 1958–cysteine 1971, cysteine 1977–cysteine 1989, cysteine 1984–cysteine 1998, cysteine 2000–cysteine 2011, cysteine 2017–cysteine 2029, cysteine 2024–cysteine 2038, cysteine 2040–cysteine 2053, cysteine 2061–cysteine 2083, cysteine 2070–cysteine 2096, cysteine 2084–cysteine 2099, cysteine 2085–cysteine 2111, cysteine 2131–cysteine 2142, cysteine 2137–cysteine 2151, cysteine 2153–cysteine 2164, cysteine 2170–cysteine 2181, cysteine 2176–cysteine 2190, cysteine 2192–cysteine 2204, cysteine 2210–cysteine 2221, cysteine 2217–cysteine 2230, cysteine 2232–cysteine 2245, cysteine 2251–cysteine 2265, cysteine 2258–cysteine 2274, cysteine 2276–cysteine 2289, cysteine 2295–cysteine 2307, cysteine 2302–cysteine 2316, and cysteine 2318–cysteine 2331. The region spanning 1808–1848 is the EGF-like 30; calcium-binding domain; that stretch reads DIDECQNGPVCQRNAECINTAGSYRCDCKPGYRFTSTGQCN. An O-linked (Glc) serine glycan is attached at serine 1830. The region spanning 1849–1890 is the EGF-like 31; calcium-binding domain; that stretch reads DRNECQEIPNICSHGQCIDTVGSFYCLCHTGFKTNADQTMCL. A glycan (O-linked (Glc) serine) is linked at serine 1871. Positions 1891–1929 constitute an EGF-like 32; calcium-binding domain; the sequence is DINECERDACGNGTCRNTIGSFNCRCNHGFILSHNNDCI. The N-linked (GlcNAc...) asparagine glycan is linked to asparagine 1902. An O-linked (Glc) serine glycan is attached at serine 1911. The region spanning 1930 to 1972 is the EGF-like 33; calcium-binding domain; the sequence is DVDECATGNGNLCRNGQCINTVGSFQCQCNEGYEVAPDGRTCV. O-linked (Glc) serine glycosylation is present at serine 1953. Residues 1973 to 2012 form the EGF-like 34; calcium-binding domain; that stretch reads DINECLLEPGKCAPGTCQNLDGSYRCICPPGYSLQNDKCE. Residues 2013–2054 form the EGF-like 35; calcium-binding domain; that stretch reads DIDECVEEPEICALGTCSNTEGSFKCLCPDGFSLSSTGRRCQ. A glycan (O-linked (Glc) serine) is linked at serine 2035. The region spanning 2059 to 2111 is the TB 8 domain; it reads SYCYAKFEGGKCSSPKSRNHSKQECCCALKGEGWGDPCELCPTEPDEAFRQIC. An N-linked (GlcNAc...) asparagine glycan is attached at asparagine 2077. One can recognise an EGF-like 36; calcium-binding domain in the interval 2127–2165; the sequence is DMDECKEPDVCKHGQCINTDGSYRCECPFGYILEGNECV. O-linked (Glc) serine glycosylation occurs at serine 2148. The region spanning 2166–2205 is the EGF-like 37; calcium-binding domain; the sequence is DTDECSVGNPCGNGTCKNVIGGFECTCEEGFEPGPMMTCE. N-linked (GlcNAc...) asparagine glycosylation is present at asparagine 2178. The EGF-like 38; calcium-binding domain occupies 2206 to 2246; sequence DINECAQNPLLCAFRCVNTYGSYECKCPTGYVLREDRRMCK. Serine 2227 carries O-linked (Glc) serine glycosylation. The EGF-like 39; calcium-binding domain maps to 2247–2290; sequence DEDECEEGKHDCAEKQMECKNLIGMYICICGPGYQRRPDGEGCV. The 42-residue stretch at 2291–2332 folds into the EGF-like 40; calcium-binding domain; the sequence is DENECQTKPGICENGRCLNTRGSYTCECNDGFTASPTQDECL. Serine 2313 carries O-linked (Glc) serine glycosylation. In terms of domain architecture, TB 9 spans 2337-2390; that stretch reads GYCFTEVLQNMCQIGSSNRNPVTKSECCCDGGRGWGPHCEICPFQGTVAFKKLC. Residues 2402–2443 enclose the EGF-like 41; calcium-binding domain; sequence DIDECKVIHDVCRNGECINDRGSYHCICKTGYTPDITGTACV. 21 disulfides stabilise this stretch: cysteine 2406–cysteine 2418, cysteine 2413–cysteine 2427, cysteine 2429–cysteine 2442, cysteine 2448–cysteine 2459, cysteine 2455–cysteine 2468, cysteine 2470–cysteine 2483, cysteine 2489–cysteine 2500, cysteine 2496–cysteine 2509, cysteine 2511–cysteine 2522, cysteine 2528–cysteine 2541, cysteine 2535–cysteine 2550, cysteine 2552–cysteine 2565, cysteine 2571–cysteine 2581, cysteine 2577–cysteine 2590, cysteine 2592–cysteine 2605, cysteine 2611–cysteine 2622, cysteine 2617–cysteine 2631, cysteine 2633–cysteine 2646, cysteine 2652–cysteine 2663, cysteine 2659–cysteine 2672, and cysteine 2674–cysteine 2686. In terms of domain architecture, EGF-like 42; calcium-binding spans 2444-2484; the sequence is DLNECNQAPKPCNFICKNTEGSYQCSCPKGYILQEDGRSCK. Serine 2465 carries an O-linked (Glc) serine glycan. The 39-residue stretch at 2485–2523 folds into the EGF-like 43; calcium-binding domain; sequence DLDECATKQHNCQFLCVNTIGSFACKCPPGFTQHHTACI. The 43-residue stretch at 2524-2566 folds into the EGF-like 44; calcium-binding domain; that stretch reads DNNECTSDINLCGAKGICQNTPGSFTCECQRGFSLDQSGASCE. O-linked (Glc) serine glycosylation is present at serine 2547. The region spanning 2567 to 2606 is the EGF-like 45; calcium-binding domain; the sequence is DVDECEGNHRCQHGCQNIIGGYRCSCPQGYLQHYQWNQCV. The EGF-like 46; calcium-binding domain maps to 2607–2647; it reads DENECLSAHICGGASCHNTLGSYKCMCPAGFQYEQFSGGCQ. A glycan (O-linked (Glc) serine) is linked at serine 2628. Residues 2648 to 2687 enclose the EGF-like 47; calcium-binding domain; the sequence is DINECGSSQAPCSYGCSNTEGGYLCGCPPGYFRIGQGHCV. 2 positions are modified to phosphoserine: serine 2702 and serine 2709. N-linked (GlcNAc...) asparagine glycans are attached at residues asparagine 2734, asparagine 2750, and asparagine 2767.

Belongs to the fibrillin family. In terms of assembly, interacts with COL16A1. Interacts with integrin alpha-V/beta-3. Interacts with ADAMTS10; this interaction promotes microfibril assembly. Interacts with THSD4; this interaction promotes fibril formation. Interacts (via N-terminal domain) with FBLN2 and FBLN5. Interacts with ELN. Forms a ternary complex with ELN and FBLN2 or FBLN5 and a significant interaction with ELN seen only in the presence of FBLN2 or FBLN5. Interacts (via N-terminal domain) with LTBP2 (via C-terminal domain) in a Ca(+2)-dependent manner. Interacts (via N-terminal domain) with LTBP1 (via C-terminal domain). Interacts with integrins ITGA5:ITGB1, ITGAV:ITGB3 and ITGAV:ITGB6. Interacts (via N-terminal domain) with BMP2, BMP4, BMP7, BMP10 and GDF5. Interacts (via N-terminal domain) with MFAP2 and MFAP5. Interacts with ADAMTSL5. Interacts with MFAP4. Interacts (via N-terminal domain) with TNFSF11 in a Ca(+2)-dependent manner. Interacts (via N-terminal domain) with EFEMP2; this interaction inhibits EFEMP2 binding to LOX and ELN. Cleavage of N- and C-terminus by furin is required for incorporation into the extracellular matrix and assembly into microfibrils. The C-terminus, which corresponds to the Asprosin chain, was initially thought to constitute a propeptide. Fibrillin-1 and Asprosin chains are still linked together during the secretion from cells, but are subsequently separated by furin, an essential step for incorporation of Fibrillin-1 into the nascent microfibrils. In terms of processing, forms intermolecular disulfide bonds either with other fibrillin-1 molecules or with other components of the microfibrils. Post-translationally, O-glycosylated on serine residues by POGLUT2 and POGLUT3 which is necessary for efficient protein secretion.

It is found in the secreted. Its subcellular location is the extracellular space. The protein localises to the extracellular matrix. In terms of biological role, structural component of the 10-12 nm diameter microfibrils of the extracellular matrix, which conveys both structural and regulatory properties to load-bearing connective tissues. Fibrillin-1-containing microfibrils provide long-term force bearing structural support. In tissues such as the lung, blood vessels and skin, microfibrils form the periphery of the elastic fiber, acting as a scaffold for the deposition of elastin. In addition, microfibrils can occur as elastin-independent networks in tissues such as the ciliary zonule, tendon, cornea and glomerulus where they provide tensile strength and have anchoring roles. Fibrillin-1 also plays a key role in tissue homeostasis through specific interactions with growth factors, such as the bone morphogenetic proteins (BMPs), growth and differentiation factors (GDFs) and latent transforming growth factor-beta-binding proteins (LTBPs), cell-surface integrins and other extracellular matrix protein and proteoglycan components. Regulates osteoblast maturation by controlling TGF-beta bioavailability and calibrating TGF-beta and BMP levels, respectively. Negatively regulates osteoclastogenesis by binding and sequestering an osteoclast differentiation and activation factor TNFSF11. This leads to disruption of TNFSF11-induced Ca(2+) signaling and impairment of TNFSF11-mediated nuclear translocation and activation of transcription factor NFATC1 which regulates genes important for osteoclast differentiation and function. Mediates cell adhesion via its binding to cell surface receptors integrins ITGAV:ITGB3 and ITGA5:ITGB1. Binds heparin and this interaction plays an important role in the assembly of microfibrils. Its function is as follows. Hormone that targets the liver to increase plasma glucose levels. Secreted by white adipose tissue and circulates in the plasma. Acts in response to fasting and promotes blood glucose elevation by binding to the surface of hepatocytes. Promotes hepatocyte glucose release by activating the protein kinase A activity in the liver, resulting in rapid glucose release into the circulation. This Sus scrofa (Pig) protein is Fibrillin-1.